The sequence spans 125 residues: MDSCDYKSYAQALDLVNDKELIEEYKKYHKNVWKEVNEALCSIGIKKMKIFLLGTHLFMYYEARADFDPKIDFQKYTELTPKANEWDNLMRKFQQKISDIPENQLGEWWSPMDLVYDLDWFKQQQ.

Belongs to the UPF0734 family.

In Dictyostelium discoideum (Social amoeba), this protein is UPF0734 protein DDB_G0273871/DDB_G0273177.